An 81-amino-acid chain; its full sequence is ATP synthase subunit c (81 aa).

The next 2 membrane-spanning stretches (helical) occupy residues 6–26 (AAASVIAAALAVGLAAIGPGI) and 57–77 (LAFMEALTIYGLVVALVLLFA).

It belongs to the ATPase C chain family. In terms of assembly, F-type ATPases have 2 components, F(1) - the catalytic core - and F(0) - the membrane proton channel. F(1) has five subunits: alpha(3), beta(3), gamma(1), delta(1), epsilon(1). F(0) has four main subunits: a(1), b(1), b'(1) and c(10-14). The alpha and beta chains form an alternating ring which encloses part of the gamma chain. F(1) is attached to F(0) by a central stalk formed by the gamma and epsilon chains, while a peripheral stalk is formed by the delta, b and b' chains.

The protein localises to the cellular thylakoid membrane. F(1)F(0) ATP synthase produces ATP from ADP in the presence of a proton or sodium gradient. F-type ATPases consist of two structural domains, F(1) containing the extramembraneous catalytic core and F(0) containing the membrane proton channel, linked together by a central stalk and a peripheral stalk. During catalysis, ATP synthesis in the catalytic domain of F(1) is coupled via a rotary mechanism of the central stalk subunits to proton translocation. In terms of biological role, key component of the F(0) channel; it plays a direct role in translocation across the membrane. A homomeric c-ring of between 10-14 subunits forms the central stalk rotor element with the F(1) delta and epsilon subunits. The chain is ATP synthase subunit c from Picosynechococcus sp. (strain ATCC 27264 / PCC 7002 / PR-6) (Agmenellum quadruplicatum).